The chain runs to 415 residues: Putative F-box/FBD/LRR-repeat protein At3g49040 (415 aa).

Residues 10–58 enclose the F-box domain; it reads EDRISELHEALLVHIMSSLPTKTVVATSVLSKRWRHVWKTVQNLKFVSK. LRR repeat units lie at residues 60–86, 87–114, 143–170, 171–196, and 213–241; these read HQTF…DLEF, SNQL…VLDL, TLTL…HLYK, VHFY…IVHR, and RLTI…NIRR. Residues 272 to 377 enclose the FBD domain; sequence ILESLTSAKR…TSLKKATFST (106 aa).

The sequence is that of Putative F-box/FBD/LRR-repeat protein At3g49040 from Arabidopsis thaliana (Mouse-ear cress).